We begin with the raw amino-acid sequence, 146 residues long: 3-dehydroquinate dehydratase (146 aa).

Tyr-23 acts as the Proton acceptor in catalysis. Substrate-binding residues include Asn-74, His-80, and Asp-87. The Proton donor role is filled by His-100. Substrate-binding positions include 101 to 102 and Arg-111; that span reads IS.

It belongs to the type-II 3-dehydroquinase family. As to quaternary structure, homododecamer.

It carries out the reaction 3-dehydroquinate = 3-dehydroshikimate + H2O. It participates in metabolic intermediate biosynthesis; chorismate biosynthesis; chorismate from D-erythrose 4-phosphate and phosphoenolpyruvate: step 3/7. Functionally, catalyzes a trans-dehydration via an enolate intermediate. This Bacillus cereus (strain G9842) protein is 3-dehydroquinate dehydratase.